Reading from the N-terminus, the 633-residue chain is Basic helix-loop-helix ARNT-like protein 1 (633 aa).

The disordered stretch occupies residues methionine 1 to histidine 65. At serine 17 the chain carries Phosphoserine; by GSK3-beta. Over residues isoleucine 24–methionine 33 the composition is skewed to polar residues. Residues asparagine 36–glycine 41 carry the Nuclear localization signal motif. One can recognise a bHLH domain in the interval asparagine 79–leucine 132. At serine 85 the chain carries Phosphoserine. Residue serine 97 is modified to Phosphoserine; by CK2. Residues leucine 149–leucine 159 carry the Nuclear export signal 1 motif. Residues serine 150–proline 222 enclose the PAS 1 domain. Lysine 259 is covalently cross-linked (Glycyl lysine isopeptide (Lys-Gly) (interchain with G-Cter in SUMO2 and SUMO3)). Lysine 266 is covalently cross-linked (Glycyl lysine isopeptide (Lys-Gly) (interchain with G-Cter in SUMO)). One can recognise a PAS 2 domain in the interval proline 333 to arginine 403. Residues leucine 368–leucine 376 carry the Nuclear export signal 2 motif. A PAC domain is found at threonine 408–asparagine 451. 2 disordered regions span residues serine 472–alanine 499 and glycine 518–isoleucine 555. The segment covering glycine 518–proline 528 has biased composition (low complexity). Lysine 545 is subject to N6-acetyllysine.

As to quaternary structure, component of the circadian clock oscillator which includes the CRY1/2 proteins, CLOCK or NPAS2, BMAL1 or BMAL2, CSNK1D and/or CSNK1E, TIMELESS and the PER1/2/3 proteins. Forms a heterodimer with CLOCK. The CLOCK-BMAL1 heterodimer is required for E-box-dependent transactivation, for CLOCK nuclear translocation and degradation, and, for phosphorylation of both CLOCK and BMAL1. Interacts with PER1, PER2, CRY1 and CRY2 and this interaction requires a translocation to the nucleus. Interaction of the CLOCK-BMAL1 heterodimer with PER or CRY inhibits transcription activation. Ubiquitinated, leading to its proteasomal degradation. Deubiquitinated by USP9X. Post-translationally, O-glycosylated; contains O-GlcNAc. O-glycosylation by OGT prevents protein degradation by inhibiting ubiquitination. It also stabilizes the CLOCK-BMAL1 heterodimer thereby increasing CLOCK-BMAL1-mediated transcription of genes in the negative loop of the circadian clock such as PER1/2/3 and CRY1/2. In terms of processing, acetylated on Lys-545 by CLOCK during the repression phase of the circadian cycle. Acetylation facilitates recruitment of CRY1 protein and initiates the repression phase of the circadian cycle. Acetylated at Lys-545 by KAT5 during the activation phase of the cycle, leading to recruitment of the positive transcription elongation factor b (P-TEFb) and BRD4, followed by productive elongation of circadian transcripts. Deacetylated by SIRT1, which may result in decreased protein stability. Phosphorylated upon dimerization with CLOCK. Phosphorylation enhances the transcriptional activity, alters the subcellular localization and decreases the stability of the CLOCK-BMAL1 heterodimer by promoting its degradation. Phosphorylation shows circadian variations in the liver with a peak between CT10 to CT14. Phosphorylation at Ser-97 by CK2 is essential for its nuclear localization, its interaction with CLOCK and controls CLOCK nuclear entry. Dephosphorylation at Ser-85 is important for dimerization with CLOCK and transcriptional activity. Post-translationally, sumoylated on Lys-266 upon dimerization with CLOCK. Predominantly conjugated to poly-SUMO2/3 rather than SUMO1 and the level of these conjugates undergo rhythmic variation, peaking at CT9-CT12. Sumoylation localizes it exclusively to the PML body and promotes its ubiquitination in the PML body, ubiquitin-dependent proteasomal degradation and the transcriptional activity of the CLOCK-BMAL1 heterodimer. In terms of processing, undergoes lysosome-mediated degradation in a time-dependent manner in the liver.

Its subcellular location is the nucleus. The protein localises to the cytoplasm. It is found in the PML body. Transcriptional activator which forms a core component of the circadian clock. The circadian clock, an internal time-keeping system, regulates various physiological processes through the generation of approximately 24 hour circadian rhythms in gene expression, which are translated into rhythms in metabolism and behavior. It is derived from the Latin roots 'circa' (about) and 'diem' (day) and acts as an important regulator of a wide array of physiological functions including metabolism, sleep, body temperature, blood pressure, endocrine, immune, cardiovascular, and renal function. Consists of two major components: the central clock, residing in the suprachiasmatic nucleus (SCN) of the brain, and the peripheral clocks that are present in nearly every tissue and organ system. Both the central and peripheral clocks can be reset by environmental cues, also known as Zeitgebers (German for 'timegivers'). The predominant Zeitgeber for the central clock is light, which is sensed by retina and signals directly to the SCN. The central clock entrains the peripheral clocks through neuronal and hormonal signals, body temperature and feeding-related cues, aligning all clocks with the external light/dark cycle. Circadian rhythms allow an organism to achieve temporal homeostasis with its environment at the molecular level by regulating gene expression to create a peak of protein expression once every 24 hours to control when a particular physiological process is most active with respect to the solar day. Transcription and translation of core clock components (CLOCK, NPAS2, BMAL1, BMAL2, PER1, PER2, PER3, CRY1 and CRY2) plays a critical role in rhythm generation, whereas delays imposed by post-translational modifications (PTMs) are important for determining the period (tau) of the rhythms (tau refers to the period of a rhythm and is the length, in time, of one complete cycle). A diurnal rhythm is synchronized with the day/night cycle, while the ultradian and infradian rhythms have a period shorter and longer than 24 hours, respectively. Disruptions in the circadian rhythms contribute to the pathology of cardiovascular diseases, cancer, metabolic syndromes and aging. A transcription/translation feedback loop (TTFL) forms the core of the molecular circadian clock mechanism. Transcription factors, CLOCK or NPAS2 and BMAL1 or BMAL2, form the positive limb of the feedback loop, act in the form of a heterodimer and activate the transcription of core clock genes and clock-controlled genes (involved in key metabolic processes), harboring E-box elements (5'-CACGTG-3') within their promoters. The core clock genes: PER1/2/3 and CRY1/2 which are transcriptional repressors form the negative limb of the feedback loop and interact with the CLOCK|NPAS2-BMAL1|BMAL2 heterodimer inhibiting its activity and thereby negatively regulating their own expression. This heterodimer also activates nuclear receptors NR1D1/2 and RORA/B/G, which form a second feedback loop and which activate and repress BMAL1 transcription, respectively. The preferred binding motif for the CLOCK-BMAL1 heterodimer is 5'-CACGTGA-3', which contains a flanking adenine nucleotide at the 3-prime end of the canonical 6-nucleotide E-box sequence. CLOCK specifically binds to the half-site 5'-CAC-3', while BMAL1 binds to the half-site 5'-GTGA-3'. Essential for the rhythmic interaction of CLOCK with ASS1 and plays a critical role in positively regulating CLOCK-mediated acetylation of ASS1. Plays a role in protecting against lethal sepsis by limiting the expression of immune checkpoint protein CD274 in macrophages in a PKM2-dependent manner. The polypeptide is Basic helix-loop-helix ARNT-like protein 1 (BMAL1) (Tyto alba (Barn owl)).